Reading from the N-terminus, the 221-residue chain is Jacalin-related lectin 47 (221 aa).

Jacalin-type lectin domains are found at residues 1–64 (MDSN…YYYP) and 71–217 (SEKL…HVLP).

It belongs to the jacalin lectin family.

This chain is Jacalin-related lectin 47 (JAL47), found in Arabidopsis thaliana (Mouse-ear cress).